We begin with the raw amino-acid sequence, 643 residues long: MADVVKITFPDGAVKEFPKGVTTEDIAASISPGLKKKAIAGKLNERMIDLRTPIEEDGAISIITQDMPEALDILRHSTAHLMAQAVKRLYKDVKLGVGPVIENGFYYDIDVDVPITAEDLPKIEQEMKKIVKENLDIVRKEVSREEAIRRYEEIGDPLKIELINDIPEGEVVSIYEQGEFFDLCRGVHVPSTGKIKEFKLLSVAGAYWRGDSKNKMLQRIYGTAFFKKEDLDEYLRLLQEAKERDHRKLGKELDLFMTSQKVGQGLPLWLPKGATIRRTIERYIVDKELSLGYQHVYTPVLGSVELYKTSGHWDHYKDGMFPPMEMDNEQLVLRPMNCPHHMMVYKHKIHSYRELPIRIAELGTMHRYEMSGALTGLQRVRGMTLNDAHIFVRPDQIKDEFKRVVNLILDVYKDFGLTDYSFRLSYRDPQDKEKYYDDDAMWEKAQSMLKEAMDELGLDYYEAEGEAAFYGPKLDVQVRTALGKDETLSTVQLDFLLPERFDLTYIGEDGKPHRPVVIHRGVVSTMERFVAFLIEEYKGAFPTWLAPIQVQVIPVAPSIHMDYAYEVKHALQVAGIRVEVDEREEKIGYKIREAQMQKIPYMLVVGDNEVNERAVNVRKYGEQKSETMPLDAFVDSIAKEVRK.

Residues 3-64 (DVVKITFPDG…EEDGAISIIT (62 aa)) enclose the TGS domain. The interval 245–542 (DHRKLGKELD…LIEEYKGAFP (298 aa)) is catalytic. Zn(2+) is bound by residues C338, H389, and H519.

The protein belongs to the class-II aminoacyl-tRNA synthetase family. As to quaternary structure, homodimer. The cofactor is Zn(2+).

The protein localises to the cytoplasm. The enzyme catalyses tRNA(Thr) + L-threonine + ATP = L-threonyl-tRNA(Thr) + AMP + diphosphate + H(+). Catalyzes the attachment of threonine to tRNA(Thr) in a two-step reaction: L-threonine is first activated by ATP to form Thr-AMP and then transferred to the acceptor end of tRNA(Thr). Also edits incorrectly charged L-seryl-tRNA(Thr). This chain is Threonine--tRNA ligase, found in Anoxybacillus flavithermus (strain DSM 21510 / WK1).